We begin with the raw amino-acid sequence, 89 residues long: Small ribosomal subunit protein uS15 (89 aa).

Belongs to the universal ribosomal protein uS15 family. As to quaternary structure, part of the 30S ribosomal subunit. Forms a bridge to the 50S subunit in the 70S ribosome, contacting the 23S rRNA.

Its function is as follows. One of the primary rRNA binding proteins, it binds directly to 16S rRNA where it helps nucleate assembly of the platform of the 30S subunit by binding and bridging several RNA helices of the 16S rRNA. In terms of biological role, forms an intersubunit bridge (bridge B4) with the 23S rRNA of the 50S subunit in the ribosome. This chain is Small ribosomal subunit protein uS15, found in Trichodesmium erythraeum (strain IMS101).